We begin with the raw amino-acid sequence, 351 residues long: MDEKIETRLIGATMQSNEPDLERSIRPKRLSDYIGQAAVREQMDIFIRAATNRREALDHVLIFGPPGLGKTTLAHIIAHEMQAGLKQTSGPVLEKAGDLAALLTNLEPHDVLFIDEIHRLNPAIEEVLYPALEDFQLDIIIGEGPSARSIKLDLPPFTLVGATTRAGLLTSPLRDRFGIVQRLEFYRIPDLIHIVKRAAHILNVVIDENGAGEIARRSRGTPRIANRLLRRVRDFAEVRANGMINESIAKEALDLLNVDIRGLDVMDRKLLETIIKKFQGGPVGIESLAAAISEERGTIEDVIEPYLIQEGFILRTPRGRIATELTYQHFKLPLPTQSTLQENFDLLGKVE.

Positions 1 to 186 are large ATPase domain (RuvB-L); that stretch reads MDEKIETRLI…FGIVQRLEFY (186 aa). ATP-binding positions include Ile-25, Arg-26, Gly-67, Lys-70, Thr-71, Thr-72, 133–135, Arg-176, Tyr-186, and Arg-223; that span reads EDF. Mg(2+) is bound at residue Thr-71. A small ATPAse domain (RuvB-S) region spans residues 187 to 257; sequence RIPDLIHIVK…IAKEALDLLN (71 aa). The interval 260 to 351 is head domain (RuvB-H); it reads IRGLDVMDRK…ENFDLLGKVE (92 aa). Residues Arg-296, Arg-315, and Arg-320 each coordinate DNA.

It belongs to the RuvB family. Homohexamer. Forms an RuvA(8)-RuvB(12)-Holliday junction (HJ) complex. HJ DNA is sandwiched between 2 RuvA tetramers; dsDNA enters through RuvA and exits via RuvB. An RuvB hexamer assembles on each DNA strand where it exits the tetramer. Each RuvB hexamer is contacted by two RuvA subunits (via domain III) on 2 adjacent RuvB subunits; this complex drives branch migration. In the full resolvosome a probable DNA-RuvA(4)-RuvB(12)-RuvC(2) complex forms which resolves the HJ.

It localises to the cytoplasm. It catalyses the reaction ATP + H2O = ADP + phosphate + H(+). In terms of biological role, the RuvA-RuvB-RuvC complex processes Holliday junction (HJ) DNA during genetic recombination and DNA repair, while the RuvA-RuvB complex plays an important role in the rescue of blocked DNA replication forks via replication fork reversal (RFR). RuvA specifically binds to HJ cruciform DNA, conferring on it an open structure. The RuvB hexamer acts as an ATP-dependent pump, pulling dsDNA into and through the RuvAB complex. RuvB forms 2 homohexamers on either side of HJ DNA bound by 1 or 2 RuvA tetramers; 4 subunits per hexamer contact DNA at a time. Coordinated motions by a converter formed by DNA-disengaged RuvB subunits stimulates ATP hydrolysis and nucleotide exchange. Immobilization of the converter enables RuvB to convert the ATP-contained energy into a lever motion, pulling 2 nucleotides of DNA out of the RuvA tetramer per ATP hydrolyzed, thus driving DNA branch migration. The RuvB motors rotate together with the DNA substrate, which together with the progressing nucleotide cycle form the mechanistic basis for DNA recombination by continuous HJ branch migration. Branch migration allows RuvC to scan DNA until it finds its consensus sequence, where it cleaves and resolves cruciform DNA. The polypeptide is Holliday junction branch migration complex subunit RuvB (Coxiella burnetii (strain CbuG_Q212) (Coxiella burnetii (strain Q212))).